We begin with the raw amino-acid sequence, 328 residues long: Methionyl-tRNA formyltransferase (328 aa).

110–113 is a binding site for (6S)-5,6,7,8-tetrahydrofolate; that stretch reads SLLP.

The protein belongs to the Fmt family.

The enzyme catalyses L-methionyl-tRNA(fMet) + (6R)-10-formyltetrahydrofolate = N-formyl-L-methionyl-tRNA(fMet) + (6S)-5,6,7,8-tetrahydrofolate + H(+). Its function is as follows. Attaches a formyl group to the free amino group of methionyl-tRNA(fMet). The formyl group appears to play a dual role in the initiator identity of N-formylmethionyl-tRNA by promoting its recognition by IF2 and preventing the misappropriation of this tRNA by the elongation apparatus. The chain is Methionyl-tRNA formyltransferase from Prochlorococcus marinus (strain MIT 9215).